A 355-amino-acid polypeptide reads, in one-letter code: Anthranilate phosphoribosyltransferase (355 aa).

Residues Gly-102, Gly-105–Asp-106, Ser-110, Asn-112–Thr-115, Lys-130–Ser-138, and Ser-142 contribute to the 5-phospho-alpha-D-ribose 1-diphosphate site. Anthranilate is bound at residue Gly-102. Residue Ser-114 coordinates Mg(2+). Asn-133 provides a ligand contact to anthranilate. Arg-188 contacts anthranilate. Mg(2+)-binding residues include Asp-246 and Glu-247.

The protein belongs to the anthranilate phosphoribosyltransferase family. As to quaternary structure, homodimer. It depends on Mg(2+) as a cofactor.

The catalysed reaction is N-(5-phospho-beta-D-ribosyl)anthranilate + diphosphate = 5-phospho-alpha-D-ribose 1-diphosphate + anthranilate. It participates in amino-acid biosynthesis; L-tryptophan biosynthesis; L-tryptophan from chorismate: step 2/5. Catalyzes the transfer of the phosphoribosyl group of 5-phosphorylribose-1-pyrophosphate (PRPP) to anthranilate to yield N-(5'-phosphoribosyl)-anthranilate (PRA). The chain is Anthranilate phosphoribosyltransferase from Pectobacterium carotovorum subsp. carotovorum (strain PC1).